The primary structure comprises 237 residues: 4'-phosphopantetheinyl transferase gsp (237 aa).

Positions 106, 108, and 150 each coordinate Mg(2+).

The protein belongs to the P-Pant transferase superfamily. Gsp/Sfp/HetI/AcpT family. Requires Mg(2+) as cofactor.

It catalyses the reaction apo-[peptidyl-carrier protein] + CoA = holo-[peptidyl-carrier protein] + adenosine 3',5'-bisphosphate + H(+). Its function is as follows. Activates the five peptidyl carrier protein (PCP) domains of gramicidin synthase GrsAB, by transferring the 4'-phosphopantetheinyl moiety of coenzyme A (CoA) to a serine residue. Required for gramicidin S production. The protein is 4'-phosphopantetheinyl transferase gsp (gsp) of Aneurinibacillus migulanus (Bacillus migulanus).